The primary structure comprises 567 residues: Methionine--tRNA ligase (567 aa).

The 'HIGH' region motif lies at 11–21 (PYVQTVPHLGN). Zn(2+)-binding residues include C143, C146, C156, and C159. Residues 331 to 335 (KFSKS) carry the 'KMSKS' region motif. Residue K334 coordinates ATP.

The protein belongs to the class-I aminoacyl-tRNA synthetase family. MetG type 1 subfamily. Zn(2+) is required as a cofactor.

It localises to the cytoplasm. It catalyses the reaction tRNA(Met) + L-methionine + ATP = L-methionyl-tRNA(Met) + AMP + diphosphate. Its function is as follows. Is required not only for elongation of protein synthesis but also for the initiation of all mRNA translation through initiator tRNA(fMet) aminoacylation. The sequence is that of Methionine--tRNA ligase from Pyrobaculum islandicum (strain DSM 4184 / JCM 9189 / GEO3).